Consider the following 354-residue polypeptide: MVNIVAVRRHGVHVRVIHVPPVQPQPILAPLTPAAIFLVLTVDDGGEATVHEALQDISGLVRAIGFREPQKRLSAIASIGSDVWDRLFSGPRPAELHRFVELHGPRHTAPATPGDLLFHIRAESLDVCFELADRILKSMAGAVTVVDEVHGFRYFDNRDLLGFVDGTENPDGALAVSSTAIGDEDPDFAGSCYVHVQKYLHDMSAWTALSVTEQENVIGRTKLDDIELDDDVKPADAHIALNVITDDDGTELKIVRHNMPFGELGKSEYGTYFIGYSRTPRVTEQMLRNMFLGDPPGNTDRILDFSTAVTGGLFFSPTVDFLDDPPPLPAPGTPAAPPARNGSLSIGSLKGTTR.

Aspartate 165 functions as the Proton acceptor in the catalytic mechanism. Histidine 238 contacts heme. Residues 312–335 (GLFFSPTVDFLDDPPPLPAPGTPA) are targeting peptide. Positions 324–337 (DPPPLPAPGTPAAP) are enriched in pro residues. Residues 324–354 (DPPPLPAPGTPAAPPARNGSLSIGSLKGTTR) form a disordered region. A compositionally biased stretch (polar residues) spans 342 to 354 (GSLSIGSLKGTTR).

This sequence belongs to the DyP-type peroxidase family. As to quaternary structure, found in a complex with type 1 encapsulin, strongly suggesting it is found in a type 1 encapsulin nanocompartment. Homotetramer, presumably also in the type 1 encapsulin nanocompartment. It depends on heme b as a cofactor.

It is found in the encapsulin nanocompartment. The protein localises to the cell membrane. The catalysed reaction is 2 a phenolic donor + H2O2 = 2 a phenolic radical donor + 2 H2O. Cargo protein of a type 1 encapsulin nanocompartment. A heme-dependent peroxidase. This cargo-loaded encapsulin nanocompartment is probably involved in protection against oxidative damage. This chain is Dye-decolorizing peroxidase, found in Mycolicibacterium paratuberculosis (strain ATCC BAA-968 / K-10) (Mycobacterium paratuberculosis).